The sequence spans 513 residues: GMP synthase [glutamine-hydrolyzing] (513 aa).

The region spanning 9–198 is the Glutamine amidotransferase type-1 domain; that stretch reads LILVLDFGSQ…VRRVCNCTGE (190 aa). Catalysis depends on cysteine 86, which acts as the Nucleophile. Active-site residues include histidine 172 and glutamate 174. In terms of domain architecture, GMPS ATP-PPase spans 199–388; that stretch reads WTMENFIEIE…LGIPEHLVWR (190 aa). 226-232 is a binding site for ATP; sequence SGGVDSS.

As to quaternary structure, homodimer.

It carries out the reaction XMP + L-glutamine + ATP + H2O = GMP + L-glutamate + AMP + diphosphate + 2 H(+). It participates in purine metabolism; GMP biosynthesis; GMP from XMP (L-Gln route): step 1/1. In terms of biological role, catalyzes the synthesis of GMP from XMP. In Staphylococcus epidermidis (strain ATCC 12228 / FDA PCI 1200), this protein is GMP synthase [glutamine-hydrolyzing].